Here is a 219-residue protein sequence, read N- to C-terminus: uncharacterized protein (219 aa).

Helical transmembrane passes span 14-34 (LVYS…FGVL), 37-57 (TLGF…AGAS), 123-143 (FLLG…ALGV), 155-175 (VYSA…LPNL), and 189-209 (VALA…AALA).

It belongs to the AzlC family.

The protein localises to the cell membrane. This is an uncharacterized protein from Archaeoglobus fulgidus (strain ATCC 49558 / DSM 4304 / JCM 9628 / NBRC 100126 / VC-16).